The chain runs to 265 residues: MQIRQSVKLKKPLIHYITNPISINDCANMILAAGAKPIMAEHPLEVSEITSVSKSLGVNLGNITDNKMKSMLISGKTAYENKIPQVIDLVGVGCSKLRLDYARKFISECHPNVIKGNMSEIKAIYGIKSSAKGIDVGACDIITEQNFDENIKMIKRLSMETGSVVAATGVVDIISNGTHTYIISNGCEVLSMITGTGCMLTGIIASYISSGNILEGTALAIVLMGICGELSQHVKGTGSFRNELIDNIFSISDDIIIKKIRINSY.

Met-39 lines the substrate pocket. Positions 115 and 168 each coordinate ATP. Gly-195 lines the substrate pocket.

The protein belongs to the Thz kinase family. It depends on Mg(2+) as a cofactor.

The catalysed reaction is 5-(2-hydroxyethyl)-4-methylthiazole + ATP = 4-methyl-5-(2-phosphooxyethyl)-thiazole + ADP + H(+). Its pathway is cofactor biosynthesis; thiamine diphosphate biosynthesis; 4-methyl-5-(2-phosphoethyl)-thiazole from 5-(2-hydroxyethyl)-4-methylthiazole: step 1/1. Catalyzes the phosphorylation of the hydroxyl group of 4-methyl-5-beta-hydroxyethylthiazole (THZ). This chain is Hydroxyethylthiazole kinase 2, found in Clostridium botulinum (strain 657 / Type Ba4).